Here is a 514-residue protein sequence, read N- to C-terminus: CUGBP Elav-like family member 2 (514 aa).

3 consecutive RRM domains span residues 44–127 (IKMF…PADS), 136–216 (RKLF…FADT), and 429–507 (ANLF…LKRS).

This sequence belongs to the CELF/BRUNOL family.

The protein resides in the nucleus. It localises to the cytoplasm. Functionally, RNA-binding protein implicated in the regulation of several post-transcriptional events. May be involved in pre-mRNA alternative splicing, mRNA translation repression and stability. The polypeptide is CUGBP Elav-like family member 2 (celf2) (Danio rerio (Zebrafish)).